The chain runs to 398 residues: Argininosuccinate synthase (398 aa).

8 to 16 (AYSGGLDTS) is an ATP binding site. Y87 lines the L-citrulline pocket. G117 lines the ATP pocket. Residues T119, N123, and D124 each contribute to the L-aspartate site. N123 contributes to the L-citrulline binding site. 4 residues coordinate L-citrulline: R127, S175, E260, and Y272.

This sequence belongs to the argininosuccinate synthase family. Type 1 subfamily. In terms of assembly, homotetramer.

It is found in the cytoplasm. The enzyme catalyses L-citrulline + L-aspartate + ATP = 2-(N(omega)-L-arginino)succinate + AMP + diphosphate + H(+). Its pathway is amino-acid biosynthesis; L-arginine biosynthesis; L-arginine from L-ornithine and carbamoyl phosphate: step 2/3. The chain is Argininosuccinate synthase from Mycobacterium ulcerans (strain Agy99).